The chain runs to 289 residues: Pyridoxal kinase PdxY (289 aa).

Residues Ser-9 and 44–45 contribute to the substrate site; that span reads TQ. Residues Asp-112, Ala-144, Glu-149, and Lys-182 each coordinate ATP. Residue Asp-225 participates in substrate binding.

It belongs to the pyridoxine kinase family. PdxY subfamily. In terms of assembly, homodimer. Requires Mg(2+) as cofactor.

The catalysed reaction is pyridoxal + ATP = pyridoxal 5'-phosphate + ADP + H(+). The protein operates within cofactor metabolism; pyridoxal 5'-phosphate salvage; pyridoxal 5'-phosphate from pyridoxal: step 1/1. Its function is as follows. Pyridoxal kinase involved in the salvage pathway of pyridoxal 5'-phosphate (PLP). Catalyzes the phosphorylation of pyridoxal to PLP. The sequence is that of Pyridoxal kinase PdxY from Aliivibrio fischeri (strain ATCC 700601 / ES114) (Vibrio fischeri).